Reading from the N-terminus, the 535-residue chain is Peptide chain release factor 3 (535 aa).

Residues 8-276 (ARRRTFAIIS…ALVDLAPQPG (269 aa)) enclose the tr-type G domain. Residues 17-24 (SHPDAGKT), 85-89 (DTPGH), and 139-142 (NKMD) contribute to the GTP site.

This sequence belongs to the TRAFAC class translation factor GTPase superfamily. Classic translation factor GTPase family. PrfC subfamily.

It localises to the cytoplasm. In terms of biological role, increases the formation of ribosomal termination complexes and stimulates activities of RF-1 and RF-2. It binds guanine nucleotides and has strong preference for UGA stop codons. It may interact directly with the ribosome. The stimulation of RF-1 and RF-2 is significantly reduced by GTP and GDP, but not by GMP. The polypeptide is Peptide chain release factor 3 (Bordetella avium (strain 197N)).